The sequence spans 228 residues: Ribosomal RNA small subunit methyltransferase G (228 aa).

S-adenosyl-L-methionine is bound by residues G89, L94, 140 to 141 (VE), and R159.

The protein belongs to the methyltransferase superfamily. RNA methyltransferase RsmG family.

It is found in the cytoplasm. The catalysed reaction is guanosine(527) in 16S rRNA + S-adenosyl-L-methionine = N(7)-methylguanosine(527) in 16S rRNA + S-adenosyl-L-homocysteine. Functionally, specifically methylates the N7 position of guanine in position 527 of 16S rRNA. This Burkholderia lata (strain ATCC 17760 / DSM 23089 / LMG 22485 / NCIMB 9086 / R18194 / 383) protein is Ribosomal RNA small subunit methyltransferase G.